We begin with the raw amino-acid sequence, 379 residues long: Protein RecA (379 aa).

ATP is bound at residue 79 to 86 (GPESSGKT).

The protein belongs to the RecA family.

It is found in the cytoplasm. Its function is as follows. Can catalyze the hydrolysis of ATP in the presence of single-stranded DNA, the ATP-dependent uptake of single-stranded DNA by duplex DNA, and the ATP-dependent hybridization of homologous single-stranded DNAs. It interacts with LexA causing its activation and leading to its autocatalytic cleavage. The sequence is that of Protein RecA from Streptococcus thermophilus.